The following is a 336-amino-acid chain: D-alanine--D-alanine ligase (336 aa).

Positions 124-330 constitute an ATP-grasp domain; sequence KMWFSALGIP…FTQYLSLVIN (207 aa). 154 to 209 serves as a coordination point for ATP; that stretch reads ALEKWGSIFVKAASQGSSVGCYKVDEASKVLGVLKDAFGYAPYVIVEKTIKARELE. Asp-284, Glu-297, and Asn-299 together coordinate Mg(2+).

Belongs to the D-alanine--D-alanine ligase family. It depends on Mg(2+) as a cofactor. Mn(2+) is required as a cofactor.

The protein localises to the cytoplasm. It catalyses the reaction 2 D-alanine + ATP = D-alanyl-D-alanine + ADP + phosphate + H(+). The protein operates within cell wall biogenesis; peptidoglycan biosynthesis. In terms of biological role, cell wall formation. This chain is D-alanine--D-alanine ligase, found in Shewanella oneidensis (strain ATCC 700550 / JCM 31522 / CIP 106686 / LMG 19005 / NCIMB 14063 / MR-1).